We begin with the raw amino-acid sequence, 508 residues long: DNA-directed RNA polymerase subunit Rpo1C (508 aa).

Residues 1 to 123 form a unknown region; that stretch reads MIIWKDTAKN…REKYEYEKKV (123 aa). A DNA-directed RNA polymerase subunit Rpo1C region spans residues 124 to 508; it reads SSQVLDVIAE…IYKGYPKTKK (385 aa).

It belongs to the RNA polymerase beta' chain family. Part of the RNA polymerase complex.

It localises to the cytoplasm. The catalysed reaction is RNA(n) + a ribonucleoside 5'-triphosphate = RNA(n+1) + diphosphate. DNA-dependent RNA polymerase (RNAP) catalyzes the transcription of DNA into RNA using the four ribonucleoside triphosphates as substrates. Forms part of the jaw domain. The polypeptide is DNA-directed RNA polymerase subunit Rpo1C (Thermoplasma volcanium (strain ATCC 51530 / DSM 4299 / JCM 9571 / NBRC 15438 / GSS1)).